The primary structure comprises 693 residues: Polyribonucleotide nucleotidyltransferase (693 aa).

2 residues coordinate Mg(2+): D489 and D495. The region spanning 556-615 is the KH domain; the sequence is PQIHVMNINPAKIKDVVGRGGATVKGIVEKTGAQIDTSDSGEVKVFAKDKKSMDMAVAMI. Positions 625–693 constitute an S1 motif domain; it reads GQVYKGKIVK…GRVKLSLVAR (69 aa).

This sequence belongs to the polyribonucleotide nucleotidyltransferase family. In terms of assembly, component of the RNA degradosome, which is a multiprotein complex involved in RNA processing and mRNA degradation. Mg(2+) serves as cofactor.

It is found in the cytoplasm. It carries out the reaction RNA(n+1) + phosphate = RNA(n) + a ribonucleoside 5'-diphosphate. Involved in mRNA degradation. Catalyzes the phosphorolysis of single-stranded polyribonucleotides processively in the 3'- to 5'-direction. The protein is Polyribonucleotide nucleotidyltransferase of Francisella tularensis subsp. holarctica (strain FTNF002-00 / FTA).